Here is a 411-residue protein sequence, read N- to C-terminus: UPF0261 protein SACE_5696 (411 aa).

Belongs to the UPF0261 family.

This Saccharopolyspora erythraea (strain ATCC 11635 / DSM 40517 / JCM 4748 / NBRC 13426 / NCIMB 8594 / NRRL 2338) protein is UPF0261 protein SACE_5696.